Reading from the N-terminus, the 246-residue chain is DNA repair protein RecO (246 aa).

It belongs to the RecO family.

Functionally, involved in DNA repair and RecF pathway recombination. The sequence is that of DNA repair protein RecO from Maridesulfovibrio salexigens (strain ATCC 14822 / DSM 2638 / NCIMB 8403 / VKM B-1763) (Desulfovibrio salexigens).